Consider the following 1241-residue polypeptide: ATP-dependent helicase/nuclease subunit A (1241 aa).

The region spanning 12 to 485 (SQWTDDQWKA…IDLAKNFRSR (474 aa)) is the UvrD-like helicase ATP-binding domain. 33-40 (AAAGSGKT) is an ATP binding site. Residues 505–805 (GEIDYDADAE…RIMTIHKSKG (301 aa)) enclose the UvrD-like helicase C-terminal domain.

It belongs to the helicase family. AddA subfamily. Heterodimer of AddA and AddB/RexB. Mg(2+) is required as a cofactor.

The catalysed reaction is Couples ATP hydrolysis with the unwinding of duplex DNA by translocating in the 3'-5' direction.. The enzyme catalyses ATP + H2O = ADP + phosphate + H(+). The heterodimer acts as both an ATP-dependent DNA helicase and an ATP-dependent, dual-direction single-stranded exonuclease. Recognizes the chi site generating a DNA molecule suitable for the initiation of homologous recombination. The AddA nuclease domain is required for chi fragment generation; this subunit has the helicase and 3' -&gt; 5' nuclease activities. The polypeptide is ATP-dependent helicase/nuclease subunit A (Bacillus thuringiensis (strain Al Hakam)).